Here is an 838-residue protein sequence, read N- to C-terminus: Probable beta-glucosidase K (838 aa).

The N-linked (GlcNAc...) asparagine glycan is linked to Asn-19. The active site involves Asp-232. 2 N-linked (GlcNAc...) asparagine glycosylation sites follow: Asn-324 and Asn-489. The PA14 domain maps to 405–564; that stretch reads EGQPGLRMRF…DPELAIARAV (160 aa).

It belongs to the glycosyl hydrolase 3 family.

The protein resides in the secreted. It carries out the reaction Hydrolysis of terminal, non-reducing beta-D-glucosyl residues with release of beta-D-glucose.. It participates in glycan metabolism; cellulose degradation. Functionally, beta-glucosidases are one of a number of cellulolytic enzymes involved in the degradation of cellulosic biomass. Catalyzes the last step releasing glucose from the inhibitory cellobiose. The sequence is that of Probable beta-glucosidase K (bglK) from Emericella nidulans (strain FGSC A4 / ATCC 38163 / CBS 112.46 / NRRL 194 / M139) (Aspergillus nidulans).